A 528-amino-acid polypeptide reads, in one-letter code: Na(+)/H(+) antiporter NhaB (528 aa).

10 helical membrane passes run 28 to 50 (FLVINPLLFFYVSPFVAGWVLVV), 67 to 87 (PGGLLAIQAVFIGMTSPSQVL), 98 to 118 (LLLVFMVAGIYFMKQLLLFVF), 140 to 160 (AFLSAFLDALTVIAVIIAVAV), 240 to 260 (FFLRMSPVTMPVLVAGIFTCF), 305 to 325 (ALIGVWLIAGLALHLASVGLI), 350 to 370 (EEALPFTALLAVFFAIVGVII), 391 to 411 (LVIFYIANGLLSMVSDNVFVG), 449 to 469 (ATPNGQAAFLFLLTSAIAPLI), and 476 to 496 (MVWMALPYTIVLSIVGVMAIE).

This sequence belongs to the NhaB Na(+)/H(+) (TC 2.A.34) antiporter family.

Its subcellular location is the cell inner membrane. It catalyses the reaction 2 Na(+)(in) + 3 H(+)(out) = 2 Na(+)(out) + 3 H(+)(in). In terms of biological role, na(+)/H(+) antiporter that extrudes sodium in exchange for external protons. This chain is Na(+)/H(+) antiporter NhaB, found in Shewanella frigidimarina (strain NCIMB 400).